We begin with the raw amino-acid sequence, 88 residues long: L-amino-acid oxidase (88 aa).

FAD-binding positions include E74 and 81–86; that span reads GWIDST. 81-82 lines the substrate pocket; that stretch reads GW.

Belongs to the flavin monoamine oxidase family. FIG1 subfamily. As to quaternary structure, homodimer; non-covalently linked. It depends on FAD as a cofactor. N-glycosylated. In terms of tissue distribution, expressed by the venom gland.

It localises to the secreted. The catalysed reaction is an L-alpha-amino acid + O2 + H2O = a 2-oxocarboxylate + H2O2 + NH4(+). The enzyme catalyses L-leucine + O2 + H2O = 4-methyl-2-oxopentanoate + H2O2 + NH4(+). It carries out the reaction L-phenylalanine + O2 + H2O = 3-phenylpyruvate + H2O2 + NH4(+). It catalyses the reaction L-tryptophan + O2 + H2O = indole-3-pyruvate + H2O2 + NH4(+). The catalysed reaction is L-methionine + O2 + H2O = 4-methylsulfanyl-2-oxobutanoate + H2O2 + NH4(+). The enzyme catalyses L-isoleucine + O2 + H2O = (S)-3-methyl-2-oxopentanoate + H2O2 + NH4(+). It carries out the reaction L-arginine + O2 + H2O = 5-guanidino-2-oxopentanoate + H2O2 + NH4(+). It catalyses the reaction L-histidine + O2 + H2O = 3-(imidazol-5-yl)pyruvate + H2O2 + NH4(+). The catalysed reaction is L-asparagine + O2 + H2O = 2-oxosuccinamate + H2O2 + NH4(+). The enzyme catalyses L-valine + O2 + H2O = 3-methyl-2-oxobutanoate + H2O2 + NH4(+). It carries out the reaction L-glutamate + O2 + H2O = H2O2 + 2-oxoglutarate + NH4(+). Its function is as follows. Catalyzes an oxidative deamination of predominantly hydrophobic and aromatic L-amino acids, thus producing hydrogen peroxide that may contribute to the diverse toxic effects of this enzyme. Is highly active on L-Met, L-Leu, L-Phe, L-Ile, and L-Arg, moderately active on L-His, L-Trp, L-Asn, L-Glu, and L-Val, and weakly or not active on L-Gln, L-Lys, L-Asp, L-Ala, L-Tyr, L-Ser, L-Pro, L-Gly, L-Thr, and L-Cys. Exhibits diverse biological activities, such as hemorrhage, hemolysis, edema, apoptosis of vascular endothelial cells or tumor cell lines, antibacterial and antiparasitic activities. In addition, this protein has an ability to induce apoptosis in cultured HeLa and K562 cells, and inhibits ADP-induced platelet aggregation dose-dependently. Effects of snake L-amino oxidases on platelets are controversial, since they either induce aggregation or inhibit agonist-induced aggregation. These different effects are probably due to different experimental conditions. The polypeptide is L-amino-acid oxidase (Vipera berus berus (Common viper)).